A 288-amino-acid chain; its full sequence is Transmembrane and coiled-coil domain-containing protein 5A (288 aa).

Residues 13 to 105 (IISLNMDLER…VHSISELQRK (93 aa)) adopt a coiled-coil conformation. A helical membrane pass occupies residues 227-249 (SLLFSTLFFIRLLGYLIFHLSFI).

Testis-specific. Expressed in spermatogenic cells of testis but disappear by the time mature spermatozoa are formed (at protein level).

Its subcellular location is the endoplasmic reticulum membrane. The protein localises to the nucleus membrane. The sequence is that of Transmembrane and coiled-coil domain-containing protein 5A (Tmco5a) from Rattus norvegicus (Rat).